We begin with the raw amino-acid sequence, 284 residues long: L-ribulose-5-phosphate 3-epimerase UlaE (284 aa).

It belongs to the L-ribulose-5-phosphate 3-epimerase family.

It carries out the reaction L-ribulose 5-phosphate = L-xylulose 5-phosphate. The protein operates within cofactor degradation; L-ascorbate degradation; D-xylulose 5-phosphate from L-ascorbate: step 3/4. In terms of biological role, catalyzes the isomerization of L-xylulose-5-phosphate to L-ribulose-5-phosphate. Is involved in the anaerobic L-ascorbate utilization. The protein is L-ribulose-5-phosphate 3-epimerase UlaE of Escherichia coli O8 (strain IAI1).